A 264-amino-acid chain; its full sequence is Glutamate racemase (264 aa).

Residues 10-11 (DS) and 42-43 (YG) contribute to the substrate site. The active-site Proton donor/acceptor is Cys73. 74-75 (NT) contacts substrate. The active-site Proton donor/acceptor is Cys183. 184-185 (TH) is a binding site for substrate.

Belongs to the aspartate/glutamate racemases family.

It catalyses the reaction L-glutamate = D-glutamate. It participates in cell wall biogenesis; peptidoglycan biosynthesis. In terms of biological role, provides the (R)-glutamate required for cell wall biosynthesis. In Streptococcus agalactiae serotype Ia (strain ATCC 27591 / A909 / CDC SS700), this protein is Glutamate racemase.